The sequence spans 551 residues: Hydroxymethylpyrimidine/phosphomethylpyrimidine kinase THI20 (551 aa).

Q64 contributes to the 4-amino-5-hydroxymethyl-2-methylpyrimidine binding site. C468 serves as the catalytic Nucleophile. The active-site Proton donor is the E540.

In the N-terminal section; belongs to the ThiD family. This sequence in the C-terminal section; belongs to the thiaminase-2 family.

The enzyme catalyses 4-amino-5-hydroxymethyl-2-methylpyrimidine + ATP = 4-amino-2-methyl-5-(phosphooxymethyl)pyrimidine + ADP + H(+). The catalysed reaction is 4-amino-2-methyl-5-(phosphooxymethyl)pyrimidine + ATP = 4-amino-2-methyl-5-(diphosphooxymethyl)pyrimidine + ADP. It catalyses the reaction thiamine + H2O = 5-(2-hydroxyethyl)-4-methylthiazole + 4-amino-5-hydroxymethyl-2-methylpyrimidine + H(+). The protein operates within cofactor biosynthesis; thiamine diphosphate biosynthesis; 4-amino-2-methyl-5-diphosphomethylpyrimidine from 5-amino-1-(5-phospho-D-ribosyl)imidazole: step 2/3. It participates in cofactor biosynthesis; thiamine diphosphate biosynthesis; 4-amino-2-methyl-5-diphosphomethylpyrimidine from 5-amino-1-(5-phospho-D-ribosyl)imidazole: step 3/3. Functionally, trifunctional protein with both thiamine biosynthetic and degradative activity. Within the thiamine biosynthesis pathway, catalyzes the phosphorylation of hydroxymethylpyrimidine (HMP) to hydroxymethylpyrimidine phosphate (HMP-P), as well as of HMP-P to HMP-PP. Also has thiaminase II activity and degrades thiamine using water as the nucleophile, resulting only in the formation of HMP (4-amino-2-methyl-5-hydroxymethylpyrimidine) and Thz (4-methyl-5-thiazole ethanol). This is Hydroxymethylpyrimidine/phosphomethylpyrimidine kinase THI20 from Saccharomyces cerevisiae (strain ATCC 204508 / S288c) (Baker's yeast).